The sequence spans 156 residues: AP-1 complex subunit sigma-1 (156 aa).

The protein belongs to the adaptor complexes small subunit family. As to quaternary structure, adaptor protein complex 1 (AP-1) is a heterotetramer composed of two large adaptins (gamma-type subunit and beta-type subunit), a medium adaptin (mu-type subunit) and a small adaptin (sigma-type subunit).

Its subcellular location is the golgi apparatus. The protein resides in the trans-Golgi network. It is found in the cytoplasmic vesicle. The protein localises to the clathrin-coated vesicle membrane. Subunit of clathrin-associated adaptor protein complex 1 that plays a role in protein sorting in the trans-Golgi network (TGN) and endosomes. The AP complexes mediate the recruitment of clathrin to membranes and the recognition of sorting signals within the cytosolic tails of transmembrane cargo molecules. Also involved in early steps of phagocytosis and macropinocytosis. In Dictyostelium discoideum (Social amoeba), this protein is AP-1 complex subunit sigma-1 (ap1s1).